The sequence spans 71 residues: Long neurotoxin 1 (71 aa).

5 disulfide bridges follow: Cys-3–Cys-20, Cys-14–Cys-41, Cys-26–Cys-30, Cys-45–Cys-56, and Cys-57–Cys-62.

The protein belongs to the three-finger toxin family. Long-chain subfamily. Type II alpha-neurotoxin sub-subfamily. Expressed by the venom gland.

It is found in the secreted. Binds with high affinity to muscular (alpha-1/CHRNA1) and neuronal (alpha-7/CHRNA7) nicotinic acetylcholine receptor (nAChR) and hinders acetylcholine binding to the receptor, thereby impairing neuromuscular and neuronal transmission. The protein is Long neurotoxin 1 of Naja annulata annulata (Banded water cobra).